Here is a 436-residue protein sequence, read N- to C-terminus: tRNA pseudouridine synthase Pus10 (436 aa).

Residue Asp254 is the Nucleophile of the active site. Substrate is bound by residues Tyr322 and Tyr394.

This sequence belongs to the pseudouridine synthase Pus10 family.

The catalysed reaction is uridine(54) in tRNA = pseudouridine(54) in tRNA. It catalyses the reaction uridine(55) in tRNA = pseudouridine(55) in tRNA. In terms of biological role, responsible for synthesis of pseudouridine from uracil-54 and uracil-55 in the psi GC loop of transfer RNAs. This Methanopyrus kandleri (strain AV19 / DSM 6324 / JCM 9639 / NBRC 100938) protein is tRNA pseudouridine synthase Pus10.